A 262-amino-acid chain; its full sequence is Phosphatidylglycerol--prolipoprotein diacylglyceryl transferase (262 aa).

Transmembrane regions (helical) follow at residues Leu-17–Gly-37, Leu-57–Tyr-77, Gly-95–His-115, and Leu-119–Gly-139. A 1,2-diacyl-sn-glycero-3-phospho-(1'-sn-glycerol) is bound at residue Arg-140. Helical transmembrane passes span Pro-173–Tyr-193, Ala-200–Phe-220, and Phe-227–Leu-247.

It belongs to the Lgt family.

It localises to the cell inner membrane. The enzyme catalyses L-cysteinyl-[prolipoprotein] + a 1,2-diacyl-sn-glycero-3-phospho-(1'-sn-glycerol) = an S-1,2-diacyl-sn-glyceryl-L-cysteinyl-[prolipoprotein] + sn-glycerol 1-phosphate + H(+). It functions in the pathway protein modification; lipoprotein biosynthesis (diacylglyceryl transfer). Functionally, catalyzes the transfer of the diacylglyceryl group from phosphatidylglycerol to the sulfhydryl group of the N-terminal cysteine of a prolipoprotein, the first step in the formation of mature lipoproteins. The chain is Phosphatidylglycerol--prolipoprotein diacylglyceryl transferase from Bordetella parapertussis (strain 12822 / ATCC BAA-587 / NCTC 13253).